The primary structure comprises 126 residues: Small ribosomal subunit protein uS13 (126 aa).

The disordered stretch occupies residues 95 to 126; the sequence is GLPVRGQRTHTNARTRKGPRKTVAGKKKPGKK.

This sequence belongs to the universal ribosomal protein uS13 family. As to quaternary structure, part of the 30S ribosomal subunit. Forms a loose heterodimer with protein S19. Forms two bridges to the 50S subunit in the 70S ribosome.

Its function is as follows. Located at the top of the head of the 30S subunit, it contacts several helices of the 16S rRNA. In the 70S ribosome it contacts the 23S rRNA (bridge B1a) and protein L5 of the 50S subunit (bridge B1b), connecting the 2 subunits; these bridges are implicated in subunit movement. Contacts the tRNAs in the A and P-sites. The chain is Small ribosomal subunit protein uS13 from Acidothermus cellulolyticus (strain ATCC 43068 / DSM 8971 / 11B).